Reading from the N-terminus, the 59-residue chain is Antibacterial peptide enbocin (59 aa).

An N-terminal signal peptide occupies residues 1 to 20; sequence MNFTRIIFFLFVVVFATASG. Residue K21 is a propeptide. Position 58 is a serine amide (S58).

It belongs to the cecropin family.

The protein localises to the secreted. Its function is as follows. Has antibacterial activity against Gram-positive and Gram-negative bacteria. The sequence is that of Antibacterial peptide enbocin from Bombyx mori (Silk moth).